The primary structure comprises 386 residues: Chaperone protein DnaJ (386 aa).

The 66-residue stretch at 6–71 folds into the J domain; it reads DYYEILGVDR…QKRARYDQFG (66 aa). The CR-type zinc-finger motif lies at 144–226; it reads GTEKEVTVSR…CGGKGRVRKH (83 aa). Positions 157, 160, 174, 177, 200, 203, 214, and 217 each coordinate Zn(2+). CXXCXGXG motif repeat units lie at residues 157 to 164, 174 to 181, 200 to 207, and 214 to 221; these read CPTCSGSG, CRQCNGTG, CDVCHGEG, and CETCGGKG.

Belongs to the DnaJ family. In terms of assembly, homodimer. The cofactor is Zn(2+).

Its subcellular location is the cytoplasm. Participates actively in the response to hyperosmotic and heat shock by preventing the aggregation of stress-denatured proteins and by disaggregating proteins, also in an autonomous, DnaK-independent fashion. Unfolded proteins bind initially to DnaJ; upon interaction with the DnaJ-bound protein, DnaK hydrolyzes its bound ATP, resulting in the formation of a stable complex. GrpE releases ADP from DnaK; ATP binding to DnaK triggers the release of the substrate protein, thus completing the reaction cycle. Several rounds of ATP-dependent interactions between DnaJ, DnaK and GrpE are required for fully efficient folding. Also involved, together with DnaK and GrpE, in the DNA replication of plasmids through activation of initiation proteins. In Acetivibrio thermocellus (strain ATCC 27405 / DSM 1237 / JCM 9322 / NBRC 103400 / NCIMB 10682 / NRRL B-4536 / VPI 7372) (Clostridium thermocellum), this protein is Chaperone protein DnaJ.